The sequence spans 516 residues: Cytochrome P450 monooxygenase otaC (516 aa).

Residues F13–V30 form a helical membrane-spanning segment. Heme is bound at residue C454.

The protein belongs to the cytochrome P450 family. The cofactor is heme.

The protein resides in the membrane. It catalyses the reaction 7-methylmellein + 3 reduced [NADPH--hemoprotein reductase] + 3 O2 = 7-carboxymellein + 3 oxidized [NADPH--hemoprotein reductase] + 4 H2O + 4 H(+). It participates in mycotoxin biosynthesis. Functionally, cytochrome P450 monooxygenase; part of the gene cluster that mediates the biosynthesis of ochratoxin A (OTA), a mycotoxin composed of a chlorinated type I polyketide dihydroisocoumarin moiety linked to L-phenylalanine, and demonstrated to have nephrotoxic, immunotoxic, genotoxic, neurotoxic, and teratogenic properties. OtaC catalyzes the oxidation of 7-methylmellein (7-MM) into 7-carboxymellein. The pathway begins with the highly reducing polyketide synthase otaA that catalyzes the formation of the isocoumarin group during the initial stages of biosynthesis, starting from one acetate and 4 malonate units, to originate the characteristic pentaketide skeleton 7-methylmellein (7-MM) of the OTA molecule. The newly identified cyclase otaY might be involved in the polyketide cyclization reaction during the initial steps of the OTA biosynthesis. 7-MM is then oxidized into 7-carboxymellein (also called ochratoxin beta) by the cytochrome P450 monooxygenase otaC. The NRPS encoded by the otaB gene is involved in the linking of phenylalanine to the dihydroisocoumarin ring. The reaction catalyzed by NRPS results in the production of ochratoxin B (OTB), which is the non-chlorinated analog of OTA and which subsequently serves as the substrate of the halogenase otaD for chlorination activity to form the final molecular structure of OTA, containing a chlorine atom in the C-5 position of the molecule. The chain is Cytochrome P450 monooxygenase otaC from Aspergillus carbonarius (strain ITEM 5010).